We begin with the raw amino-acid sequence, 422 residues long: MNIEKVIAREVLDSRGNPTVEAEVHLDSGFSGRAIVPSGASTGSHEALELRDGGERYMGKGVERAVQNVREALGPALIGMDASEQAAIDKALMDVDGTSNKGNMGGNAILAVSLATARAAAAELDIPLYRYLGGSNAKTLPVPMMNVINGGAHADNSVDFQEFMVMPVGAPSFREALRYGAETFHHLKKVLSGRGYNTNVGDEGGFAPDLKSNEEALEVLLEAIQQAGYEPGKDICIALDPAVTELYKDGQYHLESEGRVLSSDEMIDFWADWTSRYPIVSIEDGLAEDDWDGWERLTAKVGAKTQLVGDDLFVTNPERLQQGIDRKVGNAILVKVNQIGSLTESMDAIELAKRHHYGTIISHRSGESEDAFIADLAVATNAGQIKTGSASRSDRIAKYNQLLRIEDQLGDRAVFPGRKALR.

Gln161 is a binding site for (2R)-2-phosphoglycerate. The active-site Proton donor is Glu203. Mg(2+)-binding residues include Asp240, Glu283, and Asp310. (2R)-2-phosphoglycerate is bound by residues Lys335, Arg364, Ser365, and Lys386. Lys335 (proton acceptor) is an active-site residue.

This sequence belongs to the enolase family. Mg(2+) is required as a cofactor.

The protein localises to the cytoplasm. It localises to the secreted. It is found in the cell surface. The catalysed reaction is (2R)-2-phosphoglycerate = phosphoenolpyruvate + H2O. Its pathway is carbohydrate degradation; glycolysis; pyruvate from D-glyceraldehyde 3-phosphate: step 4/5. Functionally, catalyzes the reversible conversion of 2-phosphoglycerate (2-PG) into phosphoenolpyruvate (PEP). It is essential for the degradation of carbohydrates via glycolysis. The sequence is that of Enolase from Deinococcus radiodurans (strain ATCC 13939 / DSM 20539 / JCM 16871 / CCUG 27074 / LMG 4051 / NBRC 15346 / NCIMB 9279 / VKM B-1422 / R1).